A 1347-amino-acid chain; its full sequence is Spermatogenesis-associated protein 31A3 (1347 aa).

The helical transmembrane segment at 23-43 (PWVLDIFLTLVFALGFFFLLL) threads the bilayer. Disordered regions lie at residues 55–87 (PSPS…GREC), 108–142 (HLDK…HEPM), 154–235 (SPDP…STLI), 373–397 (EQDT…GPQK), 627–658 (QDES…EAQK), 900–955 (RGIP…REAV), 1084–1161 (VHEE…PSVS), and 1313–1335 (KAVS…SHHH). Residues 60–82 (GKRKCPVGRRRRPRGRMKNHSLR) are compositionally biased toward basic residues. The segment covering 165 to 178 (LASTPSPGPMTTSV) has biased composition (polar residues). Pro residues predominate over residues 198-211 (PEPPALFPHPPHTP). Composition is skewed to polar residues over residues 627-651 (QDES…STGE) and 927-948 (LTYS…SSKA). Basic and acidic residues-rich tracts occupy residues 1108–1127 (HKSE…RLEG) and 1137–1146 (RKTEDTHQDE).

Belongs to the SPATA31 family.

It is found in the membrane. Functionally, may play a role in spermatogenesis. The polypeptide is Spermatogenesis-associated protein 31A3 (SPATA31A3) (Homo sapiens (Human)).